A 649-amino-acid polypeptide reads, in one-letter code: Echinoderm microtubule-associated protein-like 2 (649 aa).

The interval 10–649 is tandem atypical propeller in EMLs; sequence KEVIFSMEEG…DTSVLQWRVA (640 aa). WD repeat units follow at residues 56–93, 97–144, 151–192, 195–234, 241–280, 285–323, 369–406, 410–447, 452–489, 495–535, 564–602, and 609–648; these read KLDW…LYSV, RQRH…VWDS, HVLG…VWDW, ESKV…FWSL, KRQG…VWGK, ITQE…LWGS, FSLL…LWSS, QPVW…LLDT, LVAI…VYTV, KVSR…YWDA, FGIW…LFSY, and ALSH…QWRV.

The protein belongs to the WD repeat EMAP family. As to quaternary structure, interacts with GRID2 and may also interact with GRID1. Interacts with EML3. Binds unpolymerized tubulins via its WD repeat region. As to expression, widely expressed in both brain and peripheral tissues, including brainstem and enrichment in the postsynaptic density, PSD.

The protein resides in the cytoplasm. It is found in the cytoskeleton. Its subcellular location is the spindle. Functionally, tubulin binding protein that inhibits microtubule nucleation and growth, resulting in shorter microtubules. The protein is Echinoderm microtubule-associated protein-like 2 (Eml2) of Rattus norvegicus (Rat).